A 270-amino-acid polypeptide reads, in one-letter code: MRIGIYNNETAESQRVTKVLKTEMKRAGLTYVEKNPEVVITIGGDGTLLSAFHHYQKDLNNIRFVGIHTGHLGFYTDWRSFEIDDLVDSLVKDSGQAVSYPLLDMKATYSDGQIENYIALNESTIRNVTRTMVCDVFINNHLFENFRGDGLCISTPTGSTAYNKSVGGAIVDPNSVGFQLAEMASLNNRVFRTLGSPIIFGADAELILRLRDENGHVLTCDRDQWMLKSEKERYLTELSYKVSKQRIYFAQYRHNNFWNRVKDSFIGGVH.

D45 functions as the Proton acceptor in the catalytic mechanism. Residues 45–46, 121–122, R147, D149, 160–165, and A184 contribute to the NAD(+) site; these read DG, NE, and TAYNKS.

It belongs to the NAD kinase family. It depends on a divalent metal cation as a cofactor.

Its subcellular location is the cytoplasm. It carries out the reaction NAD(+) + ATP = ADP + NADP(+) + H(+). Involved in the regulation of the intracellular balance of NAD and NADP, and is a key enzyme in the biosynthesis of NADP. Catalyzes specifically the phosphorylation on 2'-hydroxyl of the adenosine moiety of NAD to yield NADP. The sequence is that of NAD kinase from Limosilactobacillus reuteri subsp. reuteri (strain JCM 1112) (Lactobacillus reuteri).